The sequence spans 279 residues: Putative pyruvate, phosphate dikinase regulatory protein (279 aa).

ADP is bound at residue G153–T160.

It belongs to the pyruvate, phosphate/water dikinase regulatory protein family. PDRP subfamily.

The enzyme catalyses N(tele)-phospho-L-histidyl/L-threonyl-[pyruvate, phosphate dikinase] + ADP = N(tele)-phospho-L-histidyl/O-phospho-L-threonyl-[pyruvate, phosphate dikinase] + AMP + H(+). It carries out the reaction N(tele)-phospho-L-histidyl/O-phospho-L-threonyl-[pyruvate, phosphate dikinase] + phosphate + H(+) = N(tele)-phospho-L-histidyl/L-threonyl-[pyruvate, phosphate dikinase] + diphosphate. Its function is as follows. Bifunctional serine/threonine kinase and phosphorylase involved in the regulation of the pyruvate, phosphate dikinase (PPDK) by catalyzing its phosphorylation/dephosphorylation. The chain is Putative pyruvate, phosphate dikinase regulatory protein from Bradyrhizobium diazoefficiens (strain JCM 10833 / BCRC 13528 / IAM 13628 / NBRC 14792 / USDA 110).